The following is a 436-amino-acid chain: Aminopeptidase C (436 aa).

Catalysis depends on residues C68, H356, and N378.

The protein belongs to the peptidase C1 family. In terms of assembly, homohexamer.

It catalyses the reaction Inactivates bleomycin B2 (a cytotoxic glycometallopeptide) by hydrolysis of a carboxyamide bond of beta-aminoalanine, but also shows general aminopeptidase activity. The specificity varies somewhat with source, but amino acid arylamides of Met, Leu and Ala are preferred.. Hydrolyzes naphthylamide-substituted amino acids as well as di- and tripeptides in which the half-cystine residue is involved in a disulfide loop, notably in oxytocin and vasopressin. Also has a bleomycin hydrolase activity. The chain is Aminopeptidase C (pepC) from Lactococcus lactis subsp. lactis (strain IL1403) (Streptococcus lactis).